A 456-amino-acid polypeptide reads, in one-letter code: Dihydroorotase (456 aa).

The Zn(2+) site is built by His-60 and His-62. Residues 62-64 (HFR) and Asn-94 contribute to the substrate site. The Zn(2+) site is built by Glu-146, His-180, His-234, and Asp-313. The active site involves Asp-313. Residue His-317 participates in substrate binding.

It belongs to the metallo-dependent hydrolases superfamily. DHOase family. Class I DHOase subfamily. Zn(2+) serves as cofactor.

The enzyme catalyses (S)-dihydroorotate + H2O = N-carbamoyl-L-aspartate + H(+). It participates in pyrimidine metabolism; UMP biosynthesis via de novo pathway; (S)-dihydroorotate from bicarbonate: step 3/3. Catalyzes the reversible cyclization of carbamoyl aspartate to dihydroorotate. The chain is Dihydroorotase from Methanosarcina mazei (strain ATCC BAA-159 / DSM 3647 / Goe1 / Go1 / JCM 11833 / OCM 88) (Methanosarcina frisia).